The following is a 1162-amino-acid chain: MAAARNATPTPQNGRDASRLSFAKITDTLTVPDLLALQTESFDWLVGSDAWKRRVEEGTAQGRTDLALNSGLEEIFEEISPIEDLGETMQLGFTNPYLEEQKYSIDECKERGKTYSAPLYVEAEFMNHLTGEIKTQTVFMGDFPLMTEKGTFIINGTERVVVSQLVRSPGVYFERQQEKTSDKDIYSARVIPSRGAWLEFEIDKRDQVGVRIDRKRKQSVTVFLKALGLTSEQILEEFKGVASIELTLEKDSILTKEEALKDIYRKLRPGEQVAAEAARALLDNFYFNPKRYDLAKVGRYKINRKLGIDKQLTDSVLTVEDILATIKYLVSLHANETKMNGTRDGKPVELRLDVDDIDHFGNRRIRAVGELIQNQVRTGLSRMERVVRERMTTQDIEAITPQTLINVRPVVAAIKEFFGTSQLSQFMDQNNPLAGLTHKRRLSALGPGGLSRERAGVEVRDVHPSHYGRMCPIETPEGPNIGLIGSLASFARINSFGFIETPYRRVVDGVVTDTIDYLTASEEDEFLVAQANAPLTKDFRFAEDRVLVRPKGGEVELVAKENVHYMDVSPRQMVSVATSLIPFLEHDDANRALMGANMQRQAVPLLRSESPLVGTGMEGYAAIDAGDVLTADASGVVQEVSAEVVTIQLDEGGTQTYYLRKFDRSNQGTSYNHRVLVSAGDRIEAGEVIADGPATENGELALGKNLLVAFMPWEGHNFEDAIILSQNLVKDDTLSSIHIEEYEVDARDTKLGKEEITRDLPNVSPELLADLDERGIIRIGAEVRPGDILVGKVTPKGETELSAEERLLRAIFNEKSREVRDTSLKVPHGEQGTIIGVKVFDSQDGDDELGSGVNQRVVVFIAQKRKITEGDKLAGRHGNKGVISKILPVEDMPFLADGTPVDVILNPLGIPGRMNFGQVLETHLGWIAKQGWEVEGKPKWAERLPDHARQAPAGTKVATPVFDGALEEEIAGLLDSTTVTRDGDRLIGSSGKTRLFDGRSGEPFPEPVSVGYMYILKLHHLVDDKIHARSTGPYSMITQQPLGGKAQFGGQRFGEMEVWALEAYGAAYALQELLTIKSDDILGRVKVYEAIVKGENIQEPGIPESFKVLIKEMQSLCLNVEVLSADGQAVSLRDTDDEVFRAAEELGINISTRFESSSIDDI.

It belongs to the RNA polymerase beta chain family. The RNAP catalytic core consists of 2 alpha, 1 beta, 1 beta' and 1 omega subunit. When a sigma factor is associated with the core the holoenzyme is formed, which can initiate transcription.

The enzyme catalyses RNA(n) + a ribonucleoside 5'-triphosphate = RNA(n+1) + diphosphate. Functionally, DNA-dependent RNA polymerase catalyzes the transcription of DNA into RNA using the four ribonucleoside triphosphates as substrates. In Clavibacter michiganensis subsp. michiganensis (strain NCPPB 382), this protein is DNA-directed RNA polymerase subunit beta.